A 419-amino-acid polypeptide reads, in one-letter code: UDP-N-acetylglucosamine 1-carboxyvinyltransferase 2 (419 aa).

24-25 (KN) is a phosphoenolpyruvate binding site. Arg94 contacts UDP-N-acetyl-alpha-D-glucosamine. The active-site Proton donor is the Cys118. Cys118 carries the post-translational modification 2-(S-cysteinyl)pyruvic acid O-phosphothioketal. UDP-N-acetyl-alpha-D-glucosamine contacts are provided by residues 123–127 (RPIDQ), Asp307, and Ile329.

Belongs to the EPSP synthase family. MurA subfamily.

It localises to the cytoplasm. It carries out the reaction phosphoenolpyruvate + UDP-N-acetyl-alpha-D-glucosamine = UDP-N-acetyl-3-O-(1-carboxyvinyl)-alpha-D-glucosamine + phosphate. It functions in the pathway cell wall biogenesis; peptidoglycan biosynthesis. Cell wall formation. Adds enolpyruvyl to UDP-N-acetylglucosamine. The sequence is that of UDP-N-acetylglucosamine 1-carboxyvinyltransferase 2 from Staphylococcus epidermidis (strain ATCC 35984 / DSM 28319 / BCRC 17069 / CCUG 31568 / BM 3577 / RP62A).